We begin with the raw amino-acid sequence, 423 residues long: Deoxyguanosinetriphosphate triphosphohydrolase-like protein (423 aa).

The HD domain occupies 66–216 (RLTHSLEVAQ…MDFSDDIAYS (151 aa)).

This sequence belongs to the dGTPase family. Type 2 subfamily.

The sequence is that of Deoxyguanosinetriphosphate triphosphohydrolase-like protein from Corynebacterium diphtheriae (strain ATCC 700971 / NCTC 13129 / Biotype gravis).